The following is a 142-amino-acid chain: Type II secretion system core protein G (142 aa).

Positions 1 to 8 are cleaved as a propeptide — leader sequence; it reads MRRQSQRG. Residue Phe-9 is modified to N-methylphenylalanine. The helical transmembrane segment at 9 to 29 threads the bilayer; sequence FTLLEIMVVIVIMGILASLVV. The disordered stretch occupies residues 122-142; that stretch reads SGQDGVPGTDDDIGNWTLSKK.

Belongs to the GSP G family. Type II secretion system is composed of four main components: the outer membrane complex, the inner membrane complex, the cytoplasmic secretion ATPase and the periplasm-spanning pseudopilus. Forms homomultimers. Post-translationally, cleaved by the prepilin peptidase. Methylated by prepilin peptidase at the amino group of the N-terminal phenylalanine once the leader sequence is cleaved.

It localises to the cell inner membrane. In terms of biological role, core component of the type II secretion system required for the energy-dependent secretion of extracellular factors such as proteases and toxins from the periplasm. Pseudopilin (pilin-like) protein that polymerizes to form the pseudopilus. Further polymerization triggers pseudopilus growth. The chain is Type II secretion system core protein G from Klebsiella michiganensis (strain ATCC 8724 / DSM 4798 / JCM 20051 / NBRC 3318 / NRRL B-199 / KCTC 1686 / BUCSAV 143 / CCM 1901).